A 179-amino-acid chain; its full sequence is Adenine phosphoribosyltransferase (179 aa).

The protein belongs to the purine/pyrimidine phosphoribosyltransferase family. In terms of assembly, homodimer.

The protein localises to the cytoplasm. The enzyme catalyses AMP + diphosphate = 5-phospho-alpha-D-ribose 1-diphosphate + adenine. Its pathway is purine metabolism; AMP biosynthesis via salvage pathway; AMP from adenine: step 1/1. Its function is as follows. Catalyzes a salvage reaction resulting in the formation of AMP, that is energically less costly than de novo synthesis. This is Adenine phosphoribosyltransferase from Beijerinckia indica subsp. indica (strain ATCC 9039 / DSM 1715 / NCIMB 8712).